The following is a 113-amino-acid chain: Large ribosomal subunit protein uL22 (113 aa).

Belongs to the universal ribosomal protein uL22 family. In terms of assembly, part of the 50S ribosomal subunit.

Functionally, this protein binds specifically to 23S rRNA; its binding is stimulated by other ribosomal proteins, e.g. L4, L17, and L20. It is important during the early stages of 50S assembly. It makes multiple contacts with different domains of the 23S rRNA in the assembled 50S subunit and ribosome. Its function is as follows. The globular domain of the protein is located near the polypeptide exit tunnel on the outside of the subunit, while an extended beta-hairpin is found that lines the wall of the exit tunnel in the center of the 70S ribosome. In Bacillus pumilus (strain SAFR-032), this protein is Large ribosomal subunit protein uL22.